The sequence spans 433 residues: Dihydroorotase (433 aa).

Residues His-63 and His-65 each coordinate Zn(2+). Substrate contacts are provided by residues 65-67 (HLR) and Asn-97. Residues Asp-155, His-182, and His-235 each contribute to the Zn(2+) site. Asn-283 is a binding site for substrate. Asp-310 is a binding site for Zn(2+). Residue Asp-310 is part of the active site. His-314 provides a ligand contact to substrate.

This sequence belongs to the metallo-dependent hydrolases superfamily. DHOase family. Class I DHOase subfamily. Zn(2+) is required as a cofactor.

It catalyses the reaction (S)-dihydroorotate + H2O = N-carbamoyl-L-aspartate + H(+). The protein operates within pyrimidine metabolism; UMP biosynthesis via de novo pathway; (S)-dihydroorotate from bicarbonate: step 3/3. Its function is as follows. Catalyzes the reversible cyclization of carbamoyl aspartate to dihydroorotate. The protein is Dihydroorotase of Anaeromyxobacter sp. (strain K).